Reading from the N-terminus, the 411-residue chain is MPGQISAVAVLFLSLTVILHGYQIREKEFPKARGYLQYTATSAEQITTKPLLQLINQRSHITLASRFKDDYIQMAAETSAIENTAHITMKTVTPVTTKSLPPISSASYTFVRSNNAHMTASSTDDTIGSGSIAHLPVPTTRASLAIVNYITGRATQLGGQTTLPKTFFTASHKSTTNQRPTLSTNVLGTSTPTHKDRSTTSPVPLVPRPTLVTWSSPAKIGTYEVLNGSRLCIKAEMGLALIVQEKDLDSATQRYFNIDPSLTHASGKCDSQKSNLFLNFQGGSVNITFTKEENLYYISEVGAYLTISNTEKTYQGKKNTLMMFETVVGHSFKCVSEQSIQLSAQLQMKTMNIHLQAFDFEGDSFGNVNECLSDYTVVLPMVAIIVVVICVVGLSVYKIRQRHQSSAYQRI.

Residues 1-21 (MPGQISAVAVLFLSLTVILHG) form the signal peptide. Residues 22–376 (YQIREKEFPK…NVNECLSDYT (355 aa)) are Lumenal-facing. A compositionally biased stretch (polar residues) spans 172-192 (HKSTTNQRPTLSTNVLGTSTP). The disordered stretch occupies residues 172-204 (HKSTTNQRPTLSTNVLGTSTPTHKDRSTTSPVP). N-linked (GlcNAc...) asparagine glycosylation is present at Asn-227. Disulfide bonds link Cys-232-Cys-269 and Cys-334-Cys-371. A helical membrane pass occupies residues 377–397 (VVLPMVAIIVVVICVVGLSVY). The Cytoplasmic segment spans residues 398–411 (KIRQRHQSSAYQRI).

The protein belongs to the LAMP family. Monomer. Interacts with FURIN.

The protein resides in the cell surface. It is found in the lysosome membrane. It localises to the cytoplasmic vesicle membrane. Its subcellular location is the early endosome membrane. Lysosomal membrane glycoprotein which plays a role in the unfolded protein response (UPR) that contributes to protein degradation and cell survival during proteasomal dysfunction. Plays a role in the process of fusion of the lysosome with the autophagosome, thereby modulating the autophagic process. Promotes hepatocellular lipogenesis through activation of the PI3K/Akt pathway. May also play a role in dendritic cell function and in adaptive immunity. The polypeptide is Lysosome-associated membrane glycoprotein 3 (Lamp3) (Mus musculus (Mouse)).